Here is a 227-residue protein sequence, read N- to C-terminus: Ribonuclease 3 (227 aa).

In terms of domain architecture, RNase III spans 6–128; it reads ASDYQQRIGY…VIAAIYLDAD (123 aa). Glu-41 contacts Mg(2+). The active site involves Asp-45. Residues Asp-114 and Glu-117 each coordinate Mg(2+). Glu-117 is a catalytic residue. The DRBM domain maps to 155-225; that stretch reads DPKTRLQEWL…ASHAINQLDS (71 aa). Residues 203-212 are compositionally biased toward basic and acidic residues; the sequence is GEGSSRRLAE. Positions 203–227 are disordered; that stretch reads GEGSSRRLAEQDAASHAINQLDSNK.

This sequence belongs to the ribonuclease III family. In terms of assembly, homodimer. The cofactor is Mg(2+).

It is found in the cytoplasm. The enzyme catalyses Endonucleolytic cleavage to 5'-phosphomonoester.. Digests double-stranded RNA. Involved in the processing of primary rRNA transcript to yield the immediate precursors to the large and small rRNAs (23S and 16S). Processes some mRNAs, and tRNAs when they are encoded in the rRNA operon. Processes pre-crRNA and tracrRNA of type II CRISPR loci if present in the organism. In Xylella fastidiosa (strain M12), this protein is Ribonuclease 3.